The chain runs to 164 residues: Transcription antitermination protein NusB (164 aa).

A disordered region spans residues 144–164 (KNGRGLIDHTPPRAAKTDAKS). Over residues 149 to 164 (LIDHTPPRAAKTDAKS) the composition is skewed to basic and acidic residues.

This sequence belongs to the NusB family.

Functionally, involved in transcription antitermination. Required for transcription of ribosomal RNA (rRNA) genes. Binds specifically to the boxA antiterminator sequence of the ribosomal RNA (rrn) operons. The sequence is that of Transcription antitermination protein NusB from Chlorobium phaeovibrioides (strain DSM 265 / 1930) (Prosthecochloris vibrioformis (strain DSM 265)).